Reading from the N-terminus, the 1122-residue chain is TSET complex member tstF (1122 aa).

The span at 88–126 (SSSASGINGTNNNNSGSNSSNNNNNNNGSLSNSPNNNNN) shows a compositional bias: low complexity. 2 disordered regions span residues 88–131 (SSSA…AFIG) and 178–215 (QTLH…STNS). Residues 178–190 (QTLHNRSPNNTIK) are compositionally biased toward polar residues. A compositionally biased stretch (low complexity) spans 191 to 215 (LSPNSSNNDSLNNNNNNINNNSTNS). WD repeat units lie at residues 298–337 (FENK…IEKQ), 342–381 (PKGT…LATQ), and 383–422 (SKVH…EVSK). Positions 731-775 (NGSVGGSSSNNSANSNNSNNNNNNNNNNSNNSNNNNNSSQPILEP) are disordered.

Component of the TSET complex, a heterohexamer composed of tstA, tstB, tstC, tstD, tstE and tstF, which may act in plasma membrane turnover. tstA, tstB, tstC and tstD are likely to be the core complex members with tstE and tstF acting as associated scaffold proteins.

This Dictyostelium discoideum (Social amoeba) protein is TSET complex member tstF.